Here is a 357-residue protein sequence, read N- to C-terminus: MACLKLQAVTKSYDGVTPVIKQIDLDVADGEFIVMVGPSGCGKSTLLRMVAGLERTTTGDIYIGDQRVTDLEPKDRGIAMVFQNYVLYPHMNVFDNMAYGLKIRGFGKEQIRQRVDEAARILELQPLLKRKPRELSGGQRQRVAMGRAIVREPAVFLFDEPLSNLDAKLRVQMRLELQQLHRRLKTTSLYVTHDQVEAMTLAQRVIVMNKGVAEQIGTPSEVYKRPASLFVASFIGSPAMNLLDGTVSPDGRTFILSDGLTLPLEIPQPQWGGRRLTLGIRPEHIQQTTSAQGVPMNLLTLELLGADNLAHGLWGGQSIIARLSHEEMPVAGSTLHLYLPPAALHFFDTDSGLRIEP.

The 232-residue stretch at 4–235 (LKLQAVTKSY…PASLFVASFI (232 aa)) folds into the ABC transporter domain. 37-44 (GPSGCGKS) is an ATP binding site.

It belongs to the ABC transporter superfamily. sn-glycerol-3-phosphate importer (TC 3.A.1.1.3) family. In terms of assembly, the complex is composed of two ATP-binding proteins (UgpC), two transmembrane proteins (UgpA and UgpE) and a solute-binding protein (UgpB).

The protein localises to the cell inner membrane. It catalyses the reaction sn-glycerol 3-phosphate(out) + ATP + H2O = sn-glycerol 3-phosphate(in) + ADP + phosphate + H(+). In terms of biological role, part of the ABC transporter complex UgpBAEC involved in sn-glycerol-3-phosphate (G3P) import. Responsible for energy coupling to the transport system. The polypeptide is sn-glycerol-3-phosphate import ATP-binding protein UgpC (Yersinia pestis bv. Antiqua (strain Antiqua)).